Reading from the N-terminus, the 100-residue chain is Urease subunit gamma (100 aa).

It belongs to the urease gamma subunit family. In terms of assembly, heterotrimer of UreA (gamma), UreB (beta) and UreC (alpha) subunits. Three heterotrimers associate to form the active enzyme.

It localises to the cytoplasm. It catalyses the reaction urea + 2 H2O + H(+) = hydrogencarbonate + 2 NH4(+). It functions in the pathway nitrogen metabolism; urea degradation; CO(2) and NH(3) from urea (urease route): step 1/1. This Shewanella halifaxensis (strain HAW-EB4) protein is Urease subunit gamma.